Here is a 263-residue protein sequence, read N- to C-terminus: Endolytic peptidoglycan transglycosylase RlpA (263 aa).

The N-terminal stretch at Met-1–Gly-16 is a signal peptide. Cys-17 carries the N-palmitoyl cysteine lipid modification. Cys-17 carries S-diacylglycerol cysteine lipidation. An SPOR domain is found at Lys-182–Thr-257.

This sequence belongs to the RlpA family.

The protein localises to the cell membrane. Lytic transglycosylase with a strong preference for naked glycan strands that lack stem peptides. The sequence is that of Endolytic peptidoglycan transglycosylase RlpA from Vibrio cholerae serotype O1 (strain ATCC 39315 / El Tor Inaba N16961).